The primary structure comprises 121 residues: Basic phospholipase A2 3 (121 aa).

7 disulfide bridges follow: C26–C115, C28–C44, C43–C95, C49–C121, C50–C88, C57–C81, and C75–C86. Ca(2+)-binding residues include Y27, G29, and G31. Residue H47 is part of the active site. Position 48 (D48) interacts with Ca(2+). D89 is an active-site residue.

It belongs to the phospholipase A2 family. Group II subfamily. D49 sub-subfamily. Requires Ca(2+) as cofactor. As to expression, expressed by the venom gland.

It localises to the secreted. The enzyme catalyses a 1,2-diacyl-sn-glycero-3-phosphocholine + H2O = a 1-acyl-sn-glycero-3-phosphocholine + a fatty acid + H(+). Its function is as follows. PLA2 catalyzes the calcium-dependent hydrolysis of the 2-acyl groups in 3-sn-phosphoglycerides. This chain is Basic phospholipase A2 3, found in Daboia russelii (Russel's viper).